We begin with the raw amino-acid sequence, 252 residues long: tRNA (guanine-N(1)-)-methyltransferase (252 aa).

S-adenosyl-L-methionine is bound by residues G113 and L133–L138.

This sequence belongs to the RNA methyltransferase TrmD family. Homodimer.

It localises to the cytoplasm. The catalysed reaction is guanosine(37) in tRNA + S-adenosyl-L-methionine = N(1)-methylguanosine(37) in tRNA + S-adenosyl-L-homocysteine + H(+). Functionally, specifically methylates guanosine-37 in various tRNAs. The sequence is that of tRNA (guanine-N(1)-)-methyltransferase from Stenotrophomonas maltophilia (strain R551-3).